The following is a 447-amino-acid chain: Tubulin beta-4 chain (447 aa).

GTP is bound by residues Q11, E71, S140, G144, T145, G146, N206, and N228. E71 serves as a coordination point for Mg(2+). Positions 428-447 (QDATAEEYEEEEHDGEEEHA) are disordered. The span at 431 to 447 (TAEEYEEEEHDGEEEHA) shows a compositional bias: acidic residues.

Belongs to the tubulin family. Dimer of alpha and beta chains. A typical microtubule is a hollow water-filled tube with an outer diameter of 25 nm and an inner diameter of 15 nM. Alpha-beta heterodimers associate head-to-tail to form protofilaments running lengthwise along the microtubule wall with the beta-tubulin subunit facing the microtubule plus end conferring a structural polarity. Microtubules usually have 13 protofilaments but different protofilament numbers can be found in some organisms and specialized cells. Mg(2+) is required as a cofactor.

The protein localises to the cytoplasm. Its subcellular location is the cytoskeleton. Tubulin is the major constituent of microtubules, a cylinder consisting of laterally associated linear protofilaments composed of alpha- and beta-tubulin heterodimers. Microtubules grow by the addition of GTP-tubulin dimers to the microtubule end, where a stabilizing cap forms. Below the cap, tubulin dimers are in GDP-bound state, owing to GTPase activity of alpha-tubulin. The protein is Tubulin beta-4 chain (TUBB4) of Zea mays (Maize).